A 310-amino-acid polypeptide reads, in one-letter code: Low-salt glycan biosynthesis protein Agl12 (310 aa).

Residues 7–13 (GGAGFIG), 32–35 (DALT), and 58–59 (DI) contribute to the NAD(+) site. S82 is a substrate binding site. T97 contacts NAD(+). Substrate contacts are provided by residues T122 and 122–124 (TDE). The Proton donor role is filled by D123. Catalysis depends on proton acceptor residues E124 and Y146. 146–150 (YSATK) lines the NAD(+) pocket. Residue N175 participates in substrate binding. N176 serves as a coordination point for NAD(+). Substrate contacts are provided by residues 185–186 (KL), 201–203 (PVY), R210, N245, and 269–272 (RAGH).

Belongs to the NAD(P)-dependent epimerase/dehydratase family. dTDP-glucose dehydratase subfamily. NAD(+) serves as cofactor.

It functions in the pathway protein modification; protein glycosylation. The protein operates within cell surface structure biogenesis; S-layer biogenesis. Functionally, lyase involved in N-glycan biosynthetic pathway that takes place under low-salt conditions (1.75 M instead of 3.4 M). Participates in the formation of the tetrasaccharide present at 'Asn-532' of S-layer glycoprotein Csg, consisting of a sulfated hexose, 2 hexoses and rhamnose. Involved in the addition of final rhamnose (sugar 4) of the tetrasaccharide on the dolichol phosphate carrier. This chain is Low-salt glycan biosynthesis protein Agl12 (agl12), found in Haloferax volcanii (strain ATCC 29605 / DSM 3757 / JCM 8879 / NBRC 14742 / NCIMB 2012 / VKM B-1768 / DS2) (Halobacterium volcanii).